We begin with the raw amino-acid sequence, 498 residues long: MNNYNNFFVKFNNQNFSDFYNSDTLSDINITLSDNLKTVSLKLHRIVLFANCEFFKGMFSGFNESIQKENIIKVPNIDICCDIIKQMYGISLSEINRDWKYMLRYYKCCDYFMLESNFPENINVSRCEFDELLDLVDEIGYNEKTIKLLAQNMPINYNITNLPSDLLSELLNYTNVNSFIFVKDFSIYLVNNDDIPKHLTNTESTVICYVPNLNRLFFKANNRLNFMDLDTEYIQQINLNNVGIINSMLCDHNTNNLIINYKSRGESIESRIEIFDTDKLKITKTIYKTNKYNINNLCLSKDFSKLAFTLSKTTLNPYTYKEIIHIYNFLTEELCEFPDEFNSKIHCLKFMNNDKDFIYYLKKDYHYQVFTCINNTHHNIFRTENIEYLEIYLDKYILLNTGYSMTIISLDKSCMGKIRDFVGEYIITPNNHVICYGYHTKSLDISQIINNLAENKEIQITSFGSPYYGIKNIFFVNDKNCLKRRIEDYLKSILKTTN.

Residues 26 to 96 (SDINITLSDN…MYGISLSEIN (71 aa)) enclose the BTB domain.

Belongs to the mimivirus BTB/WD family.

The polypeptide is Putative BTB/POZ domain-containing protein L67 (Acanthamoeba polyphaga (Amoeba)).